We begin with the raw amino-acid sequence, 270 residues long: 4-hydroxy-tetrahydrodipicolinate reductase (270 aa).

NAD(+)-binding positions include 11-16 (GAGGRM) and Glu37. Residue Arg38 coordinates NADP(+). Residues 101-103 (GTT) and 125-128 (APNM) contribute to the NAD(+) site. His158 serves as the catalytic Proton donor/acceptor. His159 contacts (S)-2,3,4,5-tetrahydrodipicolinate. Lys162 serves as the catalytic Proton donor. 168-169 (GT) contributes to the (S)-2,3,4,5-tetrahydrodipicolinate binding site.

It belongs to the DapB family.

The protein localises to the cytoplasm. It carries out the reaction (S)-2,3,4,5-tetrahydrodipicolinate + NAD(+) + H2O = (2S,4S)-4-hydroxy-2,3,4,5-tetrahydrodipicolinate + NADH + H(+). The enzyme catalyses (S)-2,3,4,5-tetrahydrodipicolinate + NADP(+) + H2O = (2S,4S)-4-hydroxy-2,3,4,5-tetrahydrodipicolinate + NADPH + H(+). The protein operates within amino-acid biosynthesis; L-lysine biosynthesis via DAP pathway; (S)-tetrahydrodipicolinate from L-aspartate: step 4/4. In terms of biological role, catalyzes the conversion of 4-hydroxy-tetrahydrodipicolinate (HTPA) to tetrahydrodipicolinate. The chain is 4-hydroxy-tetrahydrodipicolinate reductase from Shewanella putrefaciens (strain CN-32 / ATCC BAA-453).